Reading from the N-terminus, the 62-residue chain is Photosystem II reaction center protein Z (62 aa).

The next 2 membrane-spanning stretches (helical) occupy residues 8 to 28 and 41 to 61; these read ALIA…VAYA and YLGS…NFFV.

Belongs to the PsbZ family. As to quaternary structure, PSII is composed of 1 copy each of membrane proteins PsbA, PsbB, PsbC, PsbD, PsbE, PsbF, PsbH, PsbI, PsbJ, PsbK, PsbL, PsbM, PsbT, PsbX, PsbY, PsbZ, Psb30/Ycf12, peripheral proteins PsbO, CyanoQ (PsbQ), PsbU, PsbV and a large number of cofactors. It forms dimeric complexes.

It is found in the cellular thylakoid membrane. Functionally, may control the interaction of photosystem II (PSII) cores with the light-harvesting antenna, regulates electron flow through the 2 photosystem reaction centers. PSII is a light-driven water plastoquinone oxidoreductase, using light energy to abstract electrons from H(2)O, generating a proton gradient subsequently used for ATP formation. The chain is Photosystem II reaction center protein Z from Rippkaea orientalis (strain PCC 8801 / RF-1) (Cyanothece sp. (strain PCC 8801)).